The following is a 236-amino-acid chain: Purine nucleoside phosphorylase DeoD-type (236 aa).

Histidine 5 serves as a coordination point for a purine D-ribonucleoside. Phosphate contacts are provided by residues glycine 21, arginine 25, arginine 44, and 88-91 (RVGT). A purine D-ribonucleoside contacts are provided by residues 180–182 (EME) and 204–205 (SD). Aspartate 205 (proton donor) is an active-site residue.

It belongs to the PNP/UDP phosphorylase family. In terms of assembly, homohexamer; trimer of homodimers.

It carries out the reaction a purine D-ribonucleoside + phosphate = a purine nucleobase + alpha-D-ribose 1-phosphate. It catalyses the reaction a purine 2'-deoxy-D-ribonucleoside + phosphate = a purine nucleobase + 2-deoxy-alpha-D-ribose 1-phosphate. In terms of biological role, catalyzes the reversible phosphorolytic breakdown of the N-glycosidic bond in the beta-(deoxy)ribonucleoside molecules, with the formation of the corresponding free purine bases and pentose-1-phosphate. The chain is Purine nucleoside phosphorylase DeoD-type from Shewanella sp. (strain MR-4).